Consider the following 206-residue polypeptide: Guanylate kinase (206 aa).

A Guanylate kinase-like domain is found at 5–183; the sequence is FNLLILSGPS…SKEIILSIAK (179 aa). Position 12–19 (12–19) interacts with ATP; that stretch reads GPSGAGKS.

Belongs to the guanylate kinase family.

The protein localises to the cytoplasm. The enzyme catalyses GMP + ATP = GDP + ADP. In terms of biological role, essential for recycling GMP and indirectly, cGMP. The sequence is that of Guanylate kinase (gmk) from Helicobacter pylori (strain J99 / ATCC 700824) (Campylobacter pylori J99).